The primary structure comprises 482 residues: G-protein coupled receptor 37-like 1 (482 aa).

Residues 1–25 (MRWLWPLGVSLAVALAAGPERAPRG) form the signal peptide. Disordered regions lie at residues 25 to 56 (GVWLQQGGHQPVAQEQPDRSRRGAEREDAKGL) and 78 to 119 (PTQP…VQNP). Topologically, residues 26–134 (VWLQQGGHQP…ERSYGAYAVL (109 aa)) are extracellular. The segment covering 40–54 (QPDRSRRGAEREDAK) has biased composition (basic and acidic residues). Residue N105 is glycosylated (N-linked (GlcNAc...) asparagine). A helical membrane pass occupies residues 135 to 155 (LLALLLFAVGIVGSLAVMCIV). The Cytoplasmic segment spans residues 156–167 (WHSYYLKSAWNS). Residues 168-188 (VLASLALWDFLVLFFCLPVVT) form a helical membrane-spanning segment. Topologically, residues 189 to 205 (FHEITKQRLLGAVSCRA) are extracellular. C203 and C286 are oxidised to a cystine. Residues 206–226 (VPFVEVSSLGVTTFSLCALGI) traverse the membrane as a helical segment. At 227-251 (DRFHVATSTLPKARPIEPCPSILAK) the chain is on the cytoplasmic side. A helical membrane pass occupies residues 252-272 (LAVIWVGSMTLAAPELLLWQL). Residues 273–310 (VREPSPAAGTVDTCIMKPSAHLPESLYSLVLTYQNARM) lie on the Extracellular side of the membrane. Residues 311–331 (WWSFGCYFCLPVLFTVTCQLV) traverse the membrane as a helical segment. Over 332-361 (TWRVRGTPGRKPESRPGPQEPRGARPSSTV) the chain is Cytoplasmic. The segment at 338–358 (TPGRKPESRPGPQEPRGARPS) is disordered. Residues 362-382 (AGLAAVHALCALPENVCNVVA) traverse the membrane as a helical segment. The Extracellular segment spans residues 383-398 (AYLSAALTRQTLELLG). Residues 399–419 (LVTQFSTFFKAALTPLLLLCV) traverse the membrane as a helical segment. Residues 420–482 (SRPLGRAFLD…PPLLALGTPC (63 aa)) are Cytoplasmic-facing. Residue T480 is modified to Phosphothreonine.

This sequence belongs to the G-protein coupled receptor 1 family. In terms of assembly, interacts with the PTCH1 receptor. Post-translationally, undergoes metalloprotease-mediated cleavage which reduces its constitutive activity. Ubiquitinated.

The protein resides in the cell membrane. Its subcellular location is the cell projection. The protein localises to the cilium membrane. G-protein coupled receptor. Has been shown to bind the neuroprotective and glioprotective factor prosaposin (PSAP), leading to endocytosis followed by an ERK phosphorylation cascade. However, other studies have shown that prosaposin does not increase activity. It has been suggested that GPR37L1 is a constitutively active receptor which signals through the guanine nucleotide-binding protein G(s) subunit alpha. Participates in the regulation of postnatal cerebellar development by modulating the Shh pathway. Regulates baseline blood pressure in females and protects against cardiovascular stress in males. Mediates inhibition of astrocyte glutamate transporters and reduction in neuronal N-methyl-D-aspartate receptor activity. The protein is G-protein coupled receptor 37-like 1 (GPR37L1) of Bos taurus (Bovine).